A 92-amino-acid chain; its full sequence is Small ribosomal subunit protein uS19 (92 aa).

The protein belongs to the universal ribosomal protein uS19 family.

Functionally, protein S19 forms a complex with S13 that binds strongly to the 16S ribosomal RNA. The chain is Small ribosomal subunit protein uS19 from Bacillus pumilus (strain SAFR-032).